Consider the following 286-residue polypeptide: Phycobilisome 32.1 kDa linker polypeptide, phycocyanin-associated, rod (286 aa).

The region spanning 2–180 (AITAAASRLG…LYRGYANSDR (179 aa)) is the PBS-linker domain. One can recognise a CpcD-like domain in the interval 234–286 (DRVYRIEVTGVRSPGYPSVRRSSYAIIVPYERLSEKIQQIHKLGGKIVSITSA).

The protein belongs to the phycobilisome linker protein family.

The protein resides in the cellular thylakoid membrane. Its function is as follows. Rod linker protein, associated with phycocyanin. Linker polypeptides determine the state of aggregation and the location of the disk-shaped phycobiliprotein units within the phycobilisome and modulate their spectroscopic properties in order to mediate a directed and optimal energy transfer. The protein is Phycobilisome 32.1 kDa linker polypeptide, phycocyanin-associated, rod (cpcC) of Mastigocladus laminosus (Fischerella sp.).